A 203-amino-acid chain; its full sequence is ATP-dependent Clp protease proteolytic subunit (203 aa).

The active-site Nucleophile is S107. Residue H132 is part of the active site.

This sequence belongs to the peptidase S14 family. In terms of assembly, fourteen ClpP subunits assemble into 2 heptameric rings which stack back to back to give a disk-like structure with a central cavity, resembling the structure of eukaryotic proteasomes.

The protein localises to the cytoplasm. It catalyses the reaction Hydrolysis of proteins to small peptides in the presence of ATP and magnesium. alpha-casein is the usual test substrate. In the absence of ATP, only oligopeptides shorter than five residues are hydrolyzed (such as succinyl-Leu-Tyr-|-NHMec, and Leu-Tyr-Leu-|-Tyr-Trp, in which cleavage of the -Tyr-|-Leu- and -Tyr-|-Trp bonds also occurs).. In terms of biological role, cleaves peptides in various proteins in a process that requires ATP hydrolysis. Has a chymotrypsin-like activity. Plays a major role in the degradation of misfolded proteins. This chain is ATP-dependent Clp protease proteolytic subunit, found in Thermotoga maritima (strain ATCC 43589 / DSM 3109 / JCM 10099 / NBRC 100826 / MSB8).